The primary structure comprises 129 residues: SOSS complex subunit C homolog (129 aa).

Residues 105 to 129 (RLEPLPSPATTPTTPNAPPSHNISK) form a disordered region.

Belongs to the SOSS-C family.

The sequence is that of SOSS complex subunit C homolog from Drosophila erecta (Fruit fly).